The chain runs to 455 residues: Serine--tRNA ligase (455 aa).

Position 252–254 (252–254 (TAE)) interacts with L-serine. Residues 283–285 (RKE) and Val-299 each bind ATP. Glu-306 serves as a coordination point for L-serine. 370–373 (EVVS) provides a ligand contact to ATP. Residue Thr-406 participates in L-serine binding.

The protein belongs to the class-II aminoacyl-tRNA synthetase family. Type-1 seryl-tRNA synthetase subfamily. In terms of assembly, homodimer. The tRNA molecule binds across the dimer.

It is found in the cytoplasm. The catalysed reaction is tRNA(Ser) + L-serine + ATP = L-seryl-tRNA(Ser) + AMP + diphosphate + H(+). It catalyses the reaction tRNA(Sec) + L-serine + ATP = L-seryl-tRNA(Sec) + AMP + diphosphate + H(+). It participates in aminoacyl-tRNA biosynthesis; selenocysteinyl-tRNA(Sec) biosynthesis; L-seryl-tRNA(Sec) from L-serine and tRNA(Sec): step 1/1. Its function is as follows. Catalyzes the attachment of serine to tRNA(Ser). Is also able to aminoacylate tRNA(Sec) with serine, to form the misacylated tRNA L-seryl-tRNA(Sec), which will be further converted into selenocysteinyl-tRNA(Sec). In Thermococcus gammatolerans (strain DSM 15229 / JCM 11827 / EJ3), this protein is Serine--tRNA ligase.